Reading from the N-terminus, the 295-residue chain is Pyridoxal 5'-phosphate synthase subunit PdxS (295 aa).

D-ribose 5-phosphate is bound at residue aspartate 25. Lysine 82 (schiff-base intermediate with D-ribose 5-phosphate) is an active-site residue. D-ribose 5-phosphate is bound at residue glycine 154. Arginine 166 contacts D-glyceraldehyde 3-phosphate. D-ribose 5-phosphate contacts are provided by residues glycine 215 and 236-237 (GS).

This sequence belongs to the PdxS/SNZ family. In the presence of PdxT, forms a dodecamer of heterodimers.

The enzyme catalyses aldehydo-D-ribose 5-phosphate + D-glyceraldehyde 3-phosphate + L-glutamine = pyridoxal 5'-phosphate + L-glutamate + phosphate + 3 H2O + H(+). The protein operates within cofactor biosynthesis; pyridoxal 5'-phosphate biosynthesis. Functionally, catalyzes the formation of pyridoxal 5'-phosphate from ribose 5-phosphate (RBP), glyceraldehyde 3-phosphate (G3P) and ammonia. The ammonia is provided by the PdxT subunit. Can also use ribulose 5-phosphate and dihydroxyacetone phosphate as substrates, resulting from enzyme-catalyzed isomerization of RBP and G3P, respectively. The protein is Pyridoxal 5'-phosphate synthase subunit PdxS of Bacillus cereus (strain B4264).